Consider the following 411-residue polypeptide: Diaminobutyrate--2-oxoglutarate transaminase (411 aa).

Lys-262 is subject to N6-(pyridoxal phosphate)lysine.

It belongs to the class-III pyridoxal-phosphate-dependent aminotransferase family. Requires pyridoxal 5'-phosphate as cofactor.

The catalysed reaction is L-2,4-diaminobutanoate + 2-oxoglutarate = L-aspartate 4-semialdehyde + L-glutamate. It functions in the pathway amine and polyamine biosynthesis; ectoine biosynthesis; L-ectoine from L-aspartate 4-semialdehyde: step 1/3. Functionally, catalyzes reversively the conversion of L-aspartate beta-semialdehyde (ASA) to L-2,4-diaminobutyrate (DABA) by transamination with L-glutamate. In Vibrio cholerae serotype O1 (strain ATCC 39315 / El Tor Inaba N16961), this protein is Diaminobutyrate--2-oxoglutarate transaminase (ectB).